The chain runs to 89 residues: Small ribosomal subunit protein uS14A (89 aa).

The protein belongs to the universal ribosomal protein uS14 family. In terms of assembly, part of the 30S ribosomal subunit. Contacts proteins S3 and S10.

Its function is as follows. Binds 16S rRNA, required for the assembly of 30S particles and may also be responsible for determining the conformation of the 16S rRNA at the A site. The sequence is that of Small ribosomal subunit protein uS14A from Staphylococcus saprophyticus subsp. saprophyticus (strain ATCC 15305 / DSM 20229 / NCIMB 8711 / NCTC 7292 / S-41).